We begin with the raw amino-acid sequence, 181 residues long: Inner membrane-spanning protein YciB (181 aa).

The next 5 membrane-spanning stretches (helical) occupy residues 19–39, 50–70, 80–100, 118–138, and 148–168; these read FFDI…QLIA, MHLI…IFHD, IVYA…KPIL, LTWY…YVAF, and FKVF…VVYL.

Belongs to the YciB family.

It localises to the cell inner membrane. In terms of biological role, plays a role in cell envelope biogenesis, maintenance of cell envelope integrity and membrane homeostasis. The polypeptide is Inner membrane-spanning protein YciB (Shewanella amazonensis (strain ATCC BAA-1098 / SB2B)).